Consider the following 362-residue polypeptide: UV excision repair protein RAD23 homolog A (362 aa).

A Ubiquitin-like domain is found at Met-1–Thr-81. 2 disordered regions span residues Lys-80–Gly-160 and Gly-201–Gly-227. Over residues Pro-88 to Ser-109 the composition is skewed to low complexity. Residue Lys-122 forms a Glycyl lysine isopeptide (Lys-Gly) (interchain with G-Cter in ubiquitin) linkage. Phosphoserine occurs at positions 123, 128, 133, 136, and 138. A compositionally biased stretch (low complexity) spans Glu-126–Ser-144. Residues Ser-161–Gly-201 form the UBA 1 domain. 3 positions are modified to phosphoserine: Ser-205, Ser-294, and Ser-356. Residues Pro-317–Gln-357 form the UBA 2 domain.

Belongs to the RAD23 family. Interacts with XPC; the interaction is suggesting the existence of a functional equivalent variant XPC complex. Interacts with PSMD4 and PSMC5. Interacts with ATXN3. Interacts with UBQLN2.

The protein resides in the nucleus. Multiubiquitin chain receptor involved in modulation of proteasomal degradation. Binds to 'Lys-48'-linked polyubiquitin chains in a length-dependent manner and with a lower affinity to 'Lys-63'-linked polyubiquitin chains. Proposed to be capable to bind simultaneously to the 26S proteasome and to polyubiquitinated substrates and to deliver ubiquitinated proteins to the proteasome. Its function is as follows. Involved in nucleotide excision repair and is thought to be functional equivalent for RAD23B in global genome nucleotide excision repair (GG-NER) by association with XPC. In vitro, XPC:RAD23A dimer has NER activity. Can stabilize XPC. The sequence is that of UV excision repair protein RAD23 homolog A (RAD23A) from Bos taurus (Bovine).